Reading from the N-terminus, the 84-residue chain is U8-theraphotoxin-Hhn1c 3 (84 aa).

A signal peptide spans 1-21 (MKVALIVCLVWVMAMMELVSC). Intrachain disulfides connect cysteine 23-cysteine 35, cysteine 29-cysteine 44, cysteine 34-cysteine 67, cysteine 54-cysteine 75, and cysteine 69-cysteine 81.

Belongs to the AVIT (prokineticin) family. In terms of tissue distribution, expressed by the venom gland.

The protein resides in the secreted. The sequence is that of U8-theraphotoxin-Hhn1c 3 from Cyriopagopus hainanus (Chinese bird spider).